The chain runs to 272 residues: MSPATVLDSILEGVRADVAAREALVGMTEIKAAAAAAPPPLDVMAALRQPGIGVIAEVKRASPSAGSLAPITDPAKLARAYEDGGARIISVLTEGRRFQGSLDDLDAVRAAVSIPLLRKDFVVQPYQIHEARAHGADMLLLIVAALDQSALVSMLDRTESLGMTALVEVHTEQEADRALKAGAKVIGVNARDLTTLEVDRDCFARIASGLPSNVIRIAESGVRGTNDLLAYAGAGADAVLVGEGLVKSGDPRAAVADLVTAGTHPSCPKPAR.

It belongs to the TrpC family.

The catalysed reaction is 1-(2-carboxyphenylamino)-1-deoxy-D-ribulose 5-phosphate + H(+) = (1S,2R)-1-C-(indol-3-yl)glycerol 3-phosphate + CO2 + H2O. It participates in amino-acid biosynthesis; L-tryptophan biosynthesis; L-tryptophan from chorismate: step 4/5. In Mycobacterium ulcerans (strain Agy99), this protein is Indole-3-glycerol phosphate synthase.